A 481-amino-acid chain; its full sequence is Protein DETOXIFICATION 12 (481 aa).

Helical transmembrane passes span 38 to 58, 76 to 96, 117 to 137, 154 to 174, 187 to 207, 214 to 234, 267 to 287, 296 to 316, 336 to 356, 380 to 400, 415 to 435, and 438 to 458; these read LIFF…LQIV, LASS…SCAL, YTAM…WFNM, AGKY…LQPL, LLIT…FLVY, LGGA…LGSF, AAMI…SGLL, VLSV…AIAA, IVVY…SMSL, MAPL…LSGI, LGAF…WIHL, and VGLW…LALV.

This sequence belongs to the multi antimicrobial extrusion (MATE) (TC 2.A.66.1) family.

The protein localises to the membrane. This is Protein DETOXIFICATION 12 from Arabidopsis thaliana (Mouse-ear cress).